Reading from the N-terminus, the 143-residue chain is MLSTNSEQTRRKPNAVDAHVGQRIRQRREWQNMSQTTLGEAIGVTFQQVQKYEKGVNRVGAGRLQQISKALKVEPSYFFEDTLNKIRSEERSASNQINIPPEVVEFVVSKEGIELIRAFSRVGDYRVRRRIVMLVKSLGAHER.

In terms of domain architecture, HTH cro/C1-type spans 24–78 (IRQRREWQNMSQTTLGEAIGVTFQQVQKYEKGVNRVGAGRLQQISKALKVEPSYF). Residues 35–54 (QTTLGEAIGVTFQQVQKYEK) constitute a DNA-binding region (H-T-H motif).

This is an uncharacterized protein from Sinorhizobium fredii (strain NBRC 101917 / NGR234).